The primary structure comprises 222 residues: Probable transaldolase (222 aa).

The Schiff-base intermediate with substrate role is filled by K91.

This sequence belongs to the transaldolase family. Type 3B subfamily.

It is found in the cytoplasm. It catalyses the reaction D-sedoheptulose 7-phosphate + D-glyceraldehyde 3-phosphate = D-erythrose 4-phosphate + beta-D-fructose 6-phosphate. It functions in the pathway carbohydrate degradation; pentose phosphate pathway; D-glyceraldehyde 3-phosphate and beta-D-fructose 6-phosphate from D-ribose 5-phosphate and D-xylulose 5-phosphate (non-oxidative stage): step 2/3. Its function is as follows. Transaldolase is important for the balance of metabolites in the pentose-phosphate pathway. The sequence is that of Probable transaldolase from Pelodictyon phaeoclathratiforme (strain DSM 5477 / BU-1).